The primary structure comprises 216 residues: MSIAIIDYGSGNLHSAAKAFERAARSLEDPQKVFVTSDPDQAYGADRLVLPGVGAFADCRRGLDAVNGMVEAITEAVRVKARPMFGICVGMQLFATRGKEHVITQGLNWIGGDVEKITPRDESLKIPHMGWNTLDVLREHPVLNKLPLGPKGQHAYFVHSYHLNAANEADVLARADYGGPVTAIVAKDTAIGTQFHPEKSQRFGLALISNFLRWKP.

Positions 2–216 (SIAIIDYGSG…LISNFLRWKP (215 aa)) constitute a Glutamine amidotransferase type-1 domain. Cys88 acts as the Nucleophile in catalysis. Residues His196 and Glu198 contribute to the active site.

Heterodimer of HisH and HisF.

It is found in the cytoplasm. The enzyme catalyses 5-[(5-phospho-1-deoxy-D-ribulos-1-ylimino)methylamino]-1-(5-phospho-beta-D-ribosyl)imidazole-4-carboxamide + L-glutamine = D-erythro-1-(imidazol-4-yl)glycerol 3-phosphate + 5-amino-1-(5-phospho-beta-D-ribosyl)imidazole-4-carboxamide + L-glutamate + H(+). The catalysed reaction is L-glutamine + H2O = L-glutamate + NH4(+). Its pathway is amino-acid biosynthesis; L-histidine biosynthesis; L-histidine from 5-phospho-alpha-D-ribose 1-diphosphate: step 5/9. Its function is as follows. IGPS catalyzes the conversion of PRFAR and glutamine to IGP, AICAR and glutamate. The HisH subunit catalyzes the hydrolysis of glutamine to glutamate and ammonia as part of the synthesis of IGP and AICAR. The resulting ammonia molecule is channeled to the active site of HisF. This is Imidazole glycerol phosphate synthase subunit HisH from Bradyrhizobium diazoefficiens (strain JCM 10833 / BCRC 13528 / IAM 13628 / NBRC 14792 / USDA 110).